The chain runs to 555 residues: Vetispiradiene synthase 1 (555 aa).

The Mg(2+) site is built by Asp308, Asp312, Asp451, Thr455, and Glu459. The DDXXD motif motif lies at 308-312 (DDTFD).

It belongs to the terpene synthase family. Tpsa subfamily. Mg(2+) serves as cofactor.

It localises to the cytoplasm. The catalysed reaction is (2E,6E)-farnesyl diphosphate = (-)-vetispiradiene + diphosphate. It participates in secondary metabolite biosynthesis; terpenoid biosynthesis. Sesquiterpene synthase that catalyzes the formation of vetispiradiene from trans,trans-farnesyl diphosphate. The initial internal cyclization produces the monocyclic intermediate germacrene A. In Hyoscyamus muticus (Egyptian henbane), this protein is Vetispiradiene synthase 1.